Reading from the N-terminus, the 807-residue chain is Putative histidine biosynthesis bifunctional protein HisCD (807 aa).

The histidinol dehydrogenase stretch occupies residues Met1–Asn440. Zn(2+)-binding residues include Gln261 and His264. Catalysis depends on residues Glu328 and His329. Asp362 and His421 together coordinate Zn(2+). The interval Met441 to Asn807 is histidinol-phosphate aminotransferase. The residue at position 655 (Lys655) is an N6-(pyridoxal phosphate)lysine.

It in the N-terminal section; belongs to the histidinol dehydrogenase family. The protein in the C-terminal section; belongs to the class-II pyridoxal-phosphate-dependent aminotransferase family. Histidinol-phosphate aminotransferase subfamily. In terms of assembly, homodimer. Requires Zn(2+) as cofactor. The cofactor is pyridoxal 5'-phosphate.

It catalyses the reaction L-histidinol phosphate + 2-oxoglutarate = 3-(imidazol-4-yl)-2-oxopropyl phosphate + L-glutamate. The catalysed reaction is L-histidinol + 2 NAD(+) + H2O = L-histidine + 2 NADH + 3 H(+). It participates in amino-acid biosynthesis; L-histidine biosynthesis; L-histidine from 5-phospho-alpha-D-ribose 1-diphosphate: step 7/9. Its pathway is amino-acid biosynthesis; L-histidine biosynthesis; L-histidine from 5-phospho-alpha-D-ribose 1-diphosphate: step 9/9. Functionally, catalyzes the sequential NAD-dependent oxidations of L-histidinol to L-histidinaldehyde and then to L-histidine. The polypeptide is Putative histidine biosynthesis bifunctional protein HisCD (hisCD) (Photorhabdus laumondii subsp. laumondii (strain DSM 15139 / CIP 105565 / TT01) (Photorhabdus luminescens subsp. laumondii)).